Reading from the N-terminus, the 325-residue chain is NADH-quinone oxidoreductase subunit H (325 aa).

The next 8 helical transmembrane spans lie at 11-31 (ILLTILKAVVILLVVVTCGAF), 81-101 (VIFTLAPMIAFTSLLLAFAIV), 114-134 (IGILFFLMMAGLAVYAVLFAG), 154-174 (LSYEVFLGLSLMGVVAQAGSF), 186-206 (VWNVIPQFFGFITFAIAGVAV), 237-257 (FFVGEYIGIVTISALMVTLFF), 265-285 (LPPFIWFALKTAFFMMMFILI), and 304-324 (ICLPLTLINLLVTAAVILWQA).

Belongs to the complex I subunit 1 family. In terms of assembly, NDH-1 is composed of 13 different subunits. Subunits NuoA, H, J, K, L, M, N constitute the membrane sector of the complex.

It localises to the cell inner membrane. The enzyme catalyses a quinone + NADH + 5 H(+)(in) = a quinol + NAD(+) + 4 H(+)(out). Its function is as follows. NDH-1 shuttles electrons from NADH, via FMN and iron-sulfur (Fe-S) centers, to quinones in the respiratory chain. The immediate electron acceptor for the enzyme in this species is believed to be ubiquinone. Couples the redox reaction to proton translocation (for every two electrons transferred, four hydrogen ions are translocated across the cytoplasmic membrane), and thus conserves the redox energy in a proton gradient. This subunit may bind ubiquinone. The polypeptide is NADH-quinone oxidoreductase subunit H (Escherichia coli O139:H28 (strain E24377A / ETEC)).